The sequence spans 344 residues: Methionine import ATP-binding protein MetN (344 aa).

An ABC transporter domain is found at 2 to 241; the sequence is IELKNIGKQF…PTTQLAQQFI (240 aa). 38–45 is a binding site for ATP; sequence GASGAGKS.

Belongs to the ABC transporter superfamily. Methionine importer (TC 3.A.1.24) family. In terms of assembly, the complex is composed of two ATP-binding proteins (MetN), two transmembrane proteins (MetI) and a solute-binding protein (MetQ).

It is found in the cell inner membrane. The enzyme catalyses L-methionine(out) + ATP + H2O = L-methionine(in) + ADP + phosphate + H(+). It carries out the reaction D-methionine(out) + ATP + H2O = D-methionine(in) + ADP + phosphate + H(+). Functionally, part of the ABC transporter complex MetNIQ involved in methionine import. Responsible for energy coupling to the transport system. The chain is Methionine import ATP-binding protein MetN from Haemophilus ducreyi (strain 35000HP / ATCC 700724).